Here is a 492-residue protein sequence, read N- to C-terminus: Catalase isozyme 2 (492 aa).

Catalysis depends on residues histidine 65 and asparagine 138. Tyrosine 348 lines the heme pocket.

It belongs to the catalase family. In terms of assembly, homotetramer. It depends on heme as a cofactor.

The protein localises to the peroxisome. The enzyme catalyses 2 H2O2 = O2 + 2 H2O. Occurs in almost all aerobically respiring organisms and serves to protect cells from the toxic effects of hydrogen peroxide. The sequence is that of Catalase isozyme 2 (CAT2) from Nicotiana plumbaginifolia (Leadwort-leaved tobacco).